The sequence spans 1581 residues: Rho guanine nucleotide exchange factor 5 (1581 aa).

Disordered regions lie at residues 25–54 (EGIM…TDGH), 159–274 (VSKE…EQKQ), 316–643 (LRDS…RDGI), 659–700 (SEEF…PPTV), 741–810 (HSHP…PEFY), and 829–1051 (VPII…GSSD). The segment covering 41-54 (QEDRDPSYKWTDGH) has biased composition (basic and acidic residues). Over residues 204–221 (KQLQLEATQENQGQEGFL) the composition is skewed to polar residues. The span at 228–241 (GLEEQEGQEVEIQE) shows a compositional bias: acidic residues. Composition is skewed to basic and acidic residues over residues 326 to 336 (QESREVEERRV) and 345 to 380 (RLVE…DSGD). Ser-446 carries the phosphoserine modification. Basic and acidic residues predominate over residues 474–492 (LDNRTHNSQQEEFRLRKGI). A compositionally biased stretch (polar residues) spans 496 to 507 (SASTSVAPSGTR). The span at 515-531 (PNVFSSTATLSPVSSSV) shows a compositional bias: low complexity. Polar residues-rich tracts occupy residues 569-595 (TSDT…NSFP), 603-613 (TPDSLGMSLSF), 662-685 (FTSN…QNSA), 748-760 (TLSS…SKGS), and 779-791 (TPES…TSIP). Positions 829-843 (VPIIDPSSEPPPLPP) are enriched in pro residues. 3 stretches are compositionally biased toward polar residues: residues 867-881 (PNNQ…SVGR), 889-905 (GRST…NNEV), and 912-925 (SNMT…SPTT). Phosphoserine occurs at positions 953 and 969. Over residues 975–986 (KNSEKPLHHQLE) the composition is skewed to basic and acidic residues. Phosphoserine occurs at positions 1029 and 1110. The region spanning 1158–1342 (KLQEAKFELI…EKLIRDCNSN (185 aa)) is the DH domain. The PH domain maps to 1375–1488 (LVKSGELTAL…SALAMPREEL (114 aa)). Residues 1494–1555 (YDSPQVQCLR…PVQQVEFISN (62 aa)) enclose the SH3 domain.

As to quaternary structure, interacts with SRC. Forms a ternary complex with SRC and the PI3K 85 kDa subunit. Interacts with and is activated by the heterodimer formed by GNB1 and GNG2. Interacts with ODAM (via C-terminus). Interacts with RHOA. Activation of SRC induces tyrosine phosphorylation of ARHGEF5.

The protein resides in the nucleus. The protein localises to the cytoplasm. It is found in the cell projection. Its subcellular location is the podosome. Its function is as follows. Guanine nucleotide exchange factor which activates Rho GTPases. Strongly activates RHOA. Also strongly activates RHOB, weakly activates RHOC and RHOG and shows no effect on RHOD, RHOV, RHOQ or RAC1. Involved in regulation of cell shape and actin cytoskeletal organization. Plays a role in actin organization by generating a loss of actin stress fibers and the formation of membrane ruffles and filopodia. Required for SRC-induced podosome formation. Involved in positive regulation of immature dendritic cell migration. The chain is Rho guanine nucleotide exchange factor 5 from Mus musculus (Mouse).